A 100-amino-acid chain; its full sequence is Integration host factor subunit alpha (100 aa).

The protein belongs to the bacterial histone-like protein family. Heterodimer of an alpha and a beta chain.

Its function is as follows. This protein is one of the two subunits of integration host factor, a specific DNA-binding protein that functions in genetic recombination as well as in transcriptional and translational control. The protein is Integration host factor subunit alpha of Ectopseudomonas mendocina (strain ymp) (Pseudomonas mendocina).